The primary structure comprises 683 residues: MAKKPKNSPEKSKYSSDTSSSLYSQTWLASVVIIGLLVGYINYQHVYTLFENDKHFSHLADFEREMAYRTEMGLYYSYYKTIINAPSFLEGVQEITHDTVTEHGHEINTLNRFNLYPEVILAFLYRPFRAFAKSANWQIELCWQVNRGELRPVESCEGIGNPHYFYITGVFIVAGTVASSIFYLGVLVSDSIFGGFLSVLCFAFNHGEATRVQWTPPLRESFAFPFIIGHIAILTFVIKYKKSGHSMILLLTSMAVPALLFWQFTQFAFFTQICSIFLAFSLDLIPFSTAKTVIHSHIISFLIGFLLLFGNEMMITALYFPSILALGMIIYISPLLSNLKFRPAYVLFLAIIFASITLGLKIGLSKGLGIEDDAHIFDILRSKFTSFANFHTRLYTCSAEFDFIQYSTIEKLCGTLLIPLALISLVTFVFNFVKNTNLLWRNSEEIGENGEILYNVVQLCCSTVMAFLIMRLKLFMTPHLCIVAALFANSKLLGGDRISKTIRVSALVGVIAILFYRGIPNIRQQLNVKGEYSNPDQEMLFDWIQHNTKQDAVFAGTMPVMANVKLTTLRPIVNHPHYEHVGIRERTLKVYSMFSKKPIAEVHKIMKEMGVNYFVFQLMNCSNDERRPECVYRGMWDEEDPKNSGRTALCDLWILAANSKDNSRIAPFKIVYNANRNYIVLKI.

11 helical membrane-spanning segments follow: residues 21–41 (SLYS…VGYI), 167–187 (ITGV…LGVL), 188–208 (VSDS…NHGE), 220–240 (ESFA…VIKY), 267–287 (FAFF…LIPF), 298–318 (IISF…ITAL), 319–339 (YFPS…LSNL), 344–364 (AYVL…KIGL), 413–433 (CGTL…FNFV), 467–487 (FLIM…AALF), and 502–522 (IRVS…IPNI).

This sequence belongs to the dpy-19 family. Expressed faintly in neuroblasts QL and QR, more strongly in the neighboring epidermal cells (dorsal hyp7 cells, ventral P cells and lateral V cells), and in dorsal and ventral body muscle cells.

The protein localises to the endoplasmic reticulum membrane. Its function is as follows. C-mannosyltransferase that mediates C-mannosylation of tryptophan residues on target proteins such as unc-5 and mig-21. Mediates the attachment of alpha-mannose in C-C linkage to the C2 of the indole ring of tryptophan. C-mannosylation takes place in the endoplasmic reticulum and frequently found in thrombospondin (TSP) type-1 repeats and in the WSXWS motif of type I cytokine receptors. Required to orient neuroblasts QL and QR correctly on the anterior/posterior (A/P) axis: QL and QR are born in the same A/P position, but polarize and migrate left/right asymmetrically, QL migrates toward the posterior and QR migrates toward the anterior. Required with unc-40 to express mab-5 correctly in the Q cell descendants. The protein is C-mannosyltransferase dpy-19 (dpy-19) of Caenorhabditis elegans.